Here is a 217-residue protein sequence, read N- to C-terminus: Methylthioribulose-1-phosphate dehydratase (217 aa).

Zn(2+)-binding residues include histidine 106 and histidine 108.

This sequence belongs to the aldolase class II family. MtnB subfamily. Zn(2+) serves as cofactor.

It catalyses the reaction 5-(methylsulfanyl)-D-ribulose 1-phosphate = 5-methylsulfanyl-2,3-dioxopentyl phosphate + H2O. It functions in the pathway amino-acid biosynthesis; L-methionine biosynthesis via salvage pathway; L-methionine from S-methyl-5-thio-alpha-D-ribose 1-phosphate: step 2/6. Its function is as follows. Catalyzes the dehydration of methylthioribulose-1-phosphate (MTRu-1-P) into 2,3-diketo-5-methylthiopentyl-1-phosphate (DK-MTP-1-P). This is Methylthioribulose-1-phosphate dehydratase from Xanthomonas euvesicatoria pv. vesicatoria (strain 85-10) (Xanthomonas campestris pv. vesicatoria).